The primary structure comprises 759 residues: Catalase-peroxidase (759 aa).

The disordered stretch occupies residues 1 to 24; sequence MTQDKCPFKEQPSQPNFAGGGTSN. The segment at residues 96–242 is a cross-link (tryptophyl-tyrosyl-methioninium (Trp-Tyr) (with M-268)); sequence WHSAGTYRVF…LAAAHMGLIY (147 aa). His-97 serves as the catalytic Proton acceptor. Positions 242–268 form a cross-link, tryptophyl-tyrosyl-methioninium (Tyr-Met) (with W-96); that stretch reads YVNPEGPDGNPDPIAAAHDIRDTFGRM. His-283 contacts heme b.

This sequence belongs to the peroxidase family. Peroxidase/catalase subfamily. As to quaternary structure, homodimer or homotetramer. Requires heme b as cofactor. Post-translationally, formation of the three residue Trp-Tyr-Met cross-link is important for the catalase, but not the peroxidase activity of the enzyme.

The protein localises to the cytoplasm. It catalyses the reaction H2O2 + AH2 = A + 2 H2O. The enzyme catalyses 2 H2O2 = O2 + 2 H2O. In terms of biological role, bifunctional enzyme with both catalase and broad-spectrum peroxidase activity. The protein is Catalase-peroxidase of Neosartorya fischeri (strain ATCC 1020 / DSM 3700 / CBS 544.65 / FGSC A1164 / JCM 1740 / NRRL 181 / WB 181) (Aspergillus fischerianus).